Reading from the N-terminus, the 416-residue chain is Glutamyl-tRNA reductase (416 aa).

Residues 49 to 52, Ser105, 110 to 112, and Gln116 each bind substrate; these read TCNR and EPQ. Cys50 functions as the Nucleophile in the catalytic mechanism. Position 185–190 (185–190) interacts with NADP(+); it reads GAGETI.

Belongs to the glutamyl-tRNA reductase family. In terms of assembly, homodimer.

The enzyme catalyses (S)-4-amino-5-oxopentanoate + tRNA(Glu) + NADP(+) = L-glutamyl-tRNA(Glu) + NADPH + H(+). The protein operates within porphyrin-containing compound metabolism; protoporphyrin-IX biosynthesis; 5-aminolevulinate from L-glutamyl-tRNA(Glu): step 1/2. Functionally, catalyzes the NADPH-dependent reduction of glutamyl-tRNA(Glu) to glutamate 1-semialdehyde (GSA). In Shewanella putrefaciens (strain CN-32 / ATCC BAA-453), this protein is Glutamyl-tRNA reductase.